A 359-amino-acid chain; its full sequence is 4-galactosyl-N-acetylglucosaminide 3-alpha-L-fucosyltransferase FUT6 (359 aa).

At 1–14 (MDPLGPAKPQWSCR) the chain is on the cytoplasmic side. The helical; Signal-anchor for type II membrane protein transmembrane segment at 15–34 (CCLTTLLFQLLVAVCFFSYL) threads the bilayer. At 35 to 359 (RVSRDDPTVY…QTRSITAWFT (325 aa)) the chain is on the lumenal side. N-linked (GlcNAc...) asparagine glycans are attached at residues Asn46, Asn91, Asn153, and Asn184. The segment at 73-112 (KPTALPRCSEMLPGTADCNITADRKVYPQADAVIVHHREV) is determines site-specific fucosylation.

This sequence belongs to the glycosyltransferase 10 family. In terms of assembly, homodimer and monomer. Monomer (secreted form). Post-translationally, N-glycosylated. In terms of processing, proteolytic cleavage releases a secreted glycoform of 43 kDa.

The protein localises to the golgi apparatus. It localises to the golgi stack membrane. Its subcellular location is the secreted. It catalyses the reaction a beta-D-galactosyl-(1-&gt;4)-N-acetyl-beta-D-glucosaminyl derivative + GDP-beta-L-fucose = a beta-D-galactosyl-(1-&gt;4)-[alpha-L-fucosyl-(1-&gt;3)]-N-acetyl-beta-D-glucosaminyl derivative + GDP + H(+). The enzyme catalyses an N-acetyl-alpha-neuraminyl-(2-&gt;3)-beta-D-galactosyl-(1-&gt;4)-N-acetyl-beta-D-glucosaminyl derivative + GDP-beta-L-fucose = an alpha-Neu5Ac-(2-&gt;3)-beta-D-Gal-(1-&gt;4)-[alpha-L-Fuc-(1-&gt;3)]-beta-D-GlcNAc derivative + GDP + H(+). It carries out the reaction an alpha-Neu5Ac-(2-&gt;3)-beta-D-Gal-(1-&gt;4)-beta-D-GlcNAc-(1-&gt;3)-beta-D-Gal-(1-&gt;4)-[alpha-L-Fuc-(1-&gt;3)]-beta-D-GlcNAc derivative + GDP-beta-L-fucose = an alpha-Neu5Ac-(2-&gt;3)-beta-D-Gal-(1-&gt;4)-[alpha-L-Fuc-(1-&gt;3)]-beta-D-GlcNAc-(1-&gt;3)-beta-D-Gal-(1-&gt;4)-[alpha-L-Fuc-(1-&gt;3)]-beta-D-GlcNAc derivative + GDP + H(+). The catalysed reaction is a neolactoside nLc6Cer + GDP-beta-L-fucose = beta-D-Gal-(1-&gt;4)-[alpha-L-Fuc-(1-&gt;3)]-beta-D-GlcNAc-(1-&gt;3)-beta-D-Gal-(1-&gt;4)-beta-D-GlcNAc-(1-&gt;3)-beta-D-Gal-(1-&gt;4)-beta-D-Glc-(1&lt;-&gt;1')-Cer + GDP + H(+). It catalyses the reaction a neolactoside nLc6Cer + GDP-beta-L-fucose = beta-D-galactosyl-(1-&gt;4)-N-acetyl-beta-D-glucosaminyl-(1-&gt;3)-beta-D-galactosyl-(1-&gt;4)-[alpha-L-fucosyl-(1-&gt;3)]-N-acetyl-beta-D-glucosaminyl-(1-&gt;3)-beta-D-galactosyl-(1-&gt;4)-beta-D-glucosyl-(1&lt;-&gt;1')-ceramide + GDP + H(+). The enzyme catalyses a neolactoside VI(3)-alpha-NeuNAc-nLc6Cer + GDP-beta-L-fucose = a neolactoside VI(3)-alpha-NeuAc,V(3)-alphaFuc-nLc6Cer + GDP + H(+). It carries out the reaction beta-D-galactosyl-(1-&gt;4)-N-acetyl-D-glucosamine + GDP-beta-L-fucose = beta-D-galactosyl-(1-&gt;4)-[alpha-L-fucosyl-(1-&gt;3)]-N-acetyl-D-glucosamine + GDP + H(+). The catalysed reaction is N-acetyl-alpha-neuraminosyl-(2-&gt;3)-beta-D-galactosyl-(1-&gt;4)-N-acetyl-beta-D-glucosamine + GDP-beta-L-fucose = N-acetyl-alpha-neuraminosyl-(2-&gt;3)-beta-D-galactosyl-(1-&gt;4)-[alpha-L-fucosyl-(1-&gt;3)]-N-acetyl-beta-D-glucosamine + GDP + H(+). It catalyses the reaction lactose + GDP-beta-L-fucose = beta-D-galactosyl-(1-&gt;4)-[alpha-L-fucosyl-(1-&gt;3)]-D-glucose + GDP + H(+). The enzyme catalyses alpha-L-Fuc-(1-&gt;2)-beta-D-Gal-(1-&gt;4)-D-Glc + GDP-beta-L-fucose = alpha-L-Fuc-(1-&gt;2)-beta-D-Gal-(1-&gt;4)-[alpha-L-Fuc-(1-&gt;3)]-D-Glc + GDP + H(+). It carries out the reaction a beta-D-galactosyl-(1-&gt;4)-N-acetyl-beta-D-6-sulfooxy-glucosaminyl derivative + GDP-beta-L-fucose = a beta-D-galactosyl-(1-&gt;4)-[alpha-L-fucosyl-(1-&gt;3)]-N-acetyl-beta-D-6-sulfooxy-glucosaminyl derivative + GDP + H(+). Its pathway is protein modification; protein glycosylation. In terms of biological role, catalyzes the transfer of L-fucose, from a guanosine diphosphate-beta-L-fucose, to the N-acetyl glucosamine (GlcNAc) of a distal alpha2,3 sialylated lactosamine unit of a glycoprotein- or glycolipid-linked sialopolylactosamines chain or of a distal or internal lactosamine unit of a neutral glycoprotein- or glycolipid-linked polylactosamines chain through an alpha-1,3 glycosidic linkage and participates in surface expression of the sialyl Lewis X (sLe(x)), Lewis X (Le(x)) and non sialylated VIM2 determinants. Moreover transfers fucose to H-type 2 (Fucalpha1-2Galbeta1-4GlcNAc) chain acceptor substrates and participates in difucosylated sialyl Lewis x determinants. Also fucosylates a polylactosamine substrate having a 6 sulfate modification at the GlcNAc moiety and gives rise to sialyl and non-sialyl 6-sulfo lewis X. Does not have activity towards type 1 ((Galbeta1-3GlcNAc)) and H-type 1 chain (Fucalpha1-2Galbeta1-3GlcNAc) acceptors substrates. This Gorilla gorilla gorilla (Western lowland gorilla) protein is 4-galactosyl-N-acetylglucosaminide 3-alpha-L-fucosyltransferase FUT6.